Reading from the N-terminus, the 570-residue chain is Polypeptide N-acetylgalactosaminyltransferase 2 (570 aa).

At 1-6 the chain is on the cytoplasmic side; sequence MRRRSR. The chain crosses the membrane as a helical; Signal-anchor for type II membrane protein span at residues 7–24; that stretch reads MLLCFALLWVLGIAYYMY. Topologically, residues 25-570 are lumenal; the sequence is SGGGSALAAG…QWKFSLNLQQ (546 aa). O-linked (Xyl...) (chondroitin sulfate) serine glycosylation is present at S29. Disulfide bonds link C125–C353, C344–C422, C455–C472, and C495–C512. The catalytic subdomain A stretch occupies residues 134–239; that stretch reads LPATSVVITF…ERWLEPLLER (106 aa). Substrate contacts are provided by T142, D175, and R200. Residue D223 participates in Mn(2+) binding. A substrate-binding site is contributed by S224. H225 provides a ligand contact to Mn(2+). The segment at 299-361 is catalytic subdomain B; that stretch reads PIKTPMIAGG…PCSRVGHVFR (63 aa). W330 provides a ligand contact to substrate. Residue H358 coordinates Mn(2+). Residues R361, H364, and Y366 each contribute to the substrate site. Residues 442-565 enclose the Ricin B-type lectin domain; sequence QDIAFGALQQ…PALSQQWKFS (124 aa). The N-linked (GlcNAc...) asparagine glycan is linked to N515. Residue S535 is modified to Phosphoserine. The cysteines at positions 538 and 554 are disulfide-linked.

It belongs to the glycosyltransferase 2 family. GalNAc-T subfamily. Mn(2+) serves as cofactor. As to expression, widely expressed at high level.

It is found in the golgi apparatus. It localises to the golgi stack membrane. Its subcellular location is the secreted. It carries out the reaction L-seryl-[protein] + UDP-N-acetyl-alpha-D-galactosamine = a 3-O-[N-acetyl-alpha-D-galactosaminyl]-L-seryl-[protein] + UDP + H(+). It catalyses the reaction L-threonyl-[protein] + UDP-N-acetyl-alpha-D-galactosamine = a 3-O-[N-acetyl-alpha-D-galactosaminyl]-L-threonyl-[protein] + UDP + H(+). Its pathway is protein modification; protein glycosylation. In terms of biological role, catalyzes the initial reaction in O-linked oligosaccharide biosynthesis, the transfer of an N-acetyl-D-galactosamine residue to a serine or threonine residue on the protein receptor. Has a broad spectrum of substrates for peptides such as EA2, Muc5AC, Muc1a, Muc1b. Probably involved in O-linked glycosylation of the immunoglobulin A1 (IgA1) hinge region. Involved in O-linked glycosylation of APOC-III, ANGPTL3 and PLTP. It participates in the regulation of HDL-C metabolism. In Mus musculus (Mouse), this protein is Polypeptide N-acetylgalactosaminyltransferase 2 (Galnt2).